The following is a 349-amino-acid chain: S-adenosylmethionine:tRNA ribosyltransferase-isomerase (349 aa).

The protein belongs to the QueA family. Monomer.

The protein resides in the cytoplasm. The enzyme catalyses 7-aminomethyl-7-carbaguanosine(34) in tRNA + S-adenosyl-L-methionine = epoxyqueuosine(34) in tRNA + adenine + L-methionine + 2 H(+). It participates in tRNA modification; tRNA-queuosine biosynthesis. Transfers and isomerizes the ribose moiety from AdoMet to the 7-aminomethyl group of 7-deazaguanine (preQ1-tRNA) to give epoxyqueuosine (oQ-tRNA). The polypeptide is S-adenosylmethionine:tRNA ribosyltransferase-isomerase (Azotobacter vinelandii (strain DJ / ATCC BAA-1303)).